The primary structure comprises 140 residues: ATP synthase epsilon chain (140 aa).

This sequence belongs to the ATPase epsilon chain family. As to quaternary structure, F-type ATPases have 2 components, CF(1) - the catalytic core - and CF(0) - the membrane proton channel. CF(1) has five subunits: alpha(3), beta(3), gamma(1), delta(1), epsilon(1). CF(0) has three main subunits: a, b and c.

Its subcellular location is the cell inner membrane. Functionally, produces ATP from ADP in the presence of a proton gradient across the membrane. The protein is ATP synthase epsilon chain of Neisseria gonorrhoeae (strain ATCC 700825 / FA 1090).